The primary structure comprises 395 residues: Elongation factor Tu (395 aa).

Residues 6-205 (KPHINVGTIG…NALEKISLPT (200 aa)) form the tr-type G domain. The interval 15–22 (GHVDHGKT) is G1. 15–22 (GHVDHGKT) lines the GTP pocket. Residue Thr-22 coordinates Mg(2+). Positions 59–63 (GITIS) are G2. Residues 80–83 (DCPG) form a G3 region. GTP contacts are provided by residues 80–84 (DCPGH) and 135–138 (NKCD). The segment at 135-138 (NKCD) is G4. A G5 region spans residues 173–175 (SAV).

It belongs to the TRAFAC class translation factor GTPase superfamily. Classic translation factor GTPase family. EF-Tu/EF-1A subfamily. In terms of assembly, monomer.

Its subcellular location is the cytoplasm. The catalysed reaction is GTP + H2O = GDP + phosphate + H(+). Its function is as follows. GTP hydrolase that promotes the GTP-dependent binding of aminoacyl-tRNA to the A-site of ribosomes during protein biosynthesis. The polypeptide is Elongation factor Tu (Ehrlichia chaffeensis (strain ATCC CRL-10679 / Arkansas)).